The following is a 501-amino-acid chain: Geissoschizine oxidase (501 aa).

The chain crosses the membrane as a helical span at residues Met-1 to Val-21. Residue Cys-442 coordinates heme.

This sequence belongs to the cytochrome P450 family. Heme serves as cofactor.

The protein localises to the membrane. The enzyme catalyses (19E)-geissoschizine + reduced [NADPH--hemoprotein reductase] + O2 = akuammicine + formate + oxidized [NADPH--hemoprotein reductase] + H2O + H(+). Its pathway is alkaloid biosynthesis. In terms of biological role, a cytochrome P450 monooxygenase involved in the biosynthesis of strychnos monoterpene indole alkaloids (MIAs) natural products, compounds with effects on glucose absorption. Catalyzes the conversion of geissoschizine to akuammicine. This Alstonia scholaris (Dogbane) protein is Geissoschizine oxidase.